Here is a 550-residue protein sequence, read N- to C-terminus: Chaperonin GroEL (550 aa).

Residues 30–33 (TLGP), lysine 51, 87–91 (DGTTT), glycine 415, 480–482 (NAA), and aspartate 496 contribute to the ATP site.

Belongs to the chaperonin (HSP60) family. In terms of assembly, forms a cylinder of 14 subunits composed of two heptameric rings stacked back-to-back. Interacts with the co-chaperonin GroES.

It is found in the cytoplasm. It catalyses the reaction ATP + H2O + a folded polypeptide = ADP + phosphate + an unfolded polypeptide.. Functionally, together with its co-chaperonin GroES, plays an essential role in assisting protein folding. The GroEL-GroES system forms a nano-cage that allows encapsulation of the non-native substrate proteins and provides a physical environment optimized to promote and accelerate protein folding. The protein is Chaperonin GroEL of Variovorax paradoxus (strain S110).